Reading from the N-terminus, the 142-residue chain is Hemoglobin subunit alpha (142 aa).

Residues 2–142 (VLSAADKTNV…VSTVLTSKYR (141 aa)) enclose the Globin domain. Ser4 is modified (phosphoserine). Lys8 bears the N6-succinyllysine mark. Position 9 is a phosphothreonine (Thr9). The residue at position 12 (Lys12) is an N6-succinyllysine. Position 17 is an N6-acetyllysine; alternate (Lys17). N6-succinyllysine; alternate is present on Lys17. Lys41 bears the N6-succinyllysine mark. Position 50 is a phosphoserine (Ser50). His59 provides a ligand contact to O2. His88 contacts heme b. Position 103 is a phosphoserine (Ser103). Residue Thr109 is modified to Phosphothreonine. Residues Ser125 and Ser132 each carry the phosphoserine modification. 2 positions are modified to phosphothreonine: Thr135 and Thr138. Ser139 carries the phosphoserine modification.

Belongs to the globin family. As to quaternary structure, heterotetramer of two alpha chains and two beta chains. In terms of tissue distribution, red blood cells.

Functionally, involved in oxygen transport from the lung to the various peripheral tissues. Hemopressin acts as an antagonist peptide of the cannabinoid receptor CNR1. Hemopressin-binding efficiently blocks cannabinoid receptor CNR1 and subsequent signaling. The polypeptide is Hemoglobin subunit alpha (HBA) (Equus przewalskii (Przewalski's horse)).